Here is a 978-residue protein sequence, read N- to C-terminus: Regulator of telomere elongation helicase 1 homolog (978 aa).

A Helicase ATP-binding domain is found at 7–318; it reads NGIPVNFPFE…EDDDAKKDFT (312 aa). Residue 42–49 coordinates ATP; sequence SPTGTGKT. [4Fe-4S] cluster contacts are provided by Cys159, Cys177, Cys186, and Cys222. A DEAH box motif is present at residues 265–268; it reads DEAH.

Belongs to the helicase family. RAD3/XPD subfamily.

It localises to the nucleus. The catalysed reaction is ATP + H2O = ADP + phosphate + H(+). A probable ATP-dependent DNA helicase implicated in DNA repair and the maintenance of genomic stability. Acts as an anti-recombinase to counteract toxic recombination and limit crossover during meiosis. Regulates meiotic recombination and crossover homeostasis by physically dissociating strand invasion events and thereby promotes noncrossover repair by meiotic synthesis dependent strand annealing (SDSA) as well as disassembly of D loop recombination intermediates. The polypeptide is Regulator of telomere elongation helicase 1 homolog (Culex quinquefasciatus (Southern house mosquito)).